We begin with the raw amino-acid sequence, 191 residues long: Protein GrpE (191 aa).

The span at M1 to E21 shows a compositional bias: basic and acidic residues. The disordered stretch occupies residues M1–V39. A compositionally biased stretch (acidic residues) spans D22–D38.

The protein belongs to the GrpE family. In terms of assembly, homodimer.

Its subcellular location is the cytoplasm. Participates actively in the response to hyperosmotic and heat shock by preventing the aggregation of stress-denatured proteins, in association with DnaK and GrpE. It is the nucleotide exchange factor for DnaK and may function as a thermosensor. Unfolded proteins bind initially to DnaJ; upon interaction with the DnaJ-bound protein, DnaK hydrolyzes its bound ATP, resulting in the formation of a stable complex. GrpE releases ADP from DnaK; ATP binding to DnaK triggers the release of the substrate protein, thus completing the reaction cycle. Several rounds of ATP-dependent interactions between DnaJ, DnaK and GrpE are required for fully efficient folding. This is Protein GrpE from Tetragenococcus halophilus (Pediococcus halophilus).